The chain runs to 202 residues: MSSTFTSLRGLATRLFAGGARPSPSSLLLPNKPATAALPTAIQHQQTASYASKGKSGPPAGMFSGQKAGSKKSKGPKQVDPRIINILRHFAVLSPKRIPPPLRFGRNRYLRHWTIHRAWLLFRRQQREQRERILMQQHQSMSNACEELRNTEGPGTRETGYLYRVAMLKNGVYGLKSIPIEYASRALVETPGRQAWNHEWKR.

Residues 42–79 (IQHQQTASYASKGKSGPPAGMFSGQKAGSKKSKGPKQV) are disordered.

This sequence belongs to the mitochondrion-specific ribosomal protein mL40 family. Component of the mitochondrial large ribosomal subunit (mt-LSU). Mature N.crassa 74S mitochondrial ribosomes consist of a small (37S) and a large (54S) subunit. The 37S small subunit contains a 16S ribosomal RNA (16S mt-rRNA) and 32 different proteins. The 54S large subunit contains a 23S rRNA (23S mt-rRNA) and 42 different proteins. mL40 is binding to NAD.

It is found in the mitochondrion. Its function is as follows. Component of the mitochondrial ribosome (mitoribosome), a dedicated translation machinery responsible for the synthesis of mitochondrial genome-encoded proteins, including at least some of the essential transmembrane subunits of the mitochondrial respiratory chain. The mitoribosomes are attached to the mitochondrial inner membrane and translation products are cotranslationally integrated into the membrane. This is Large ribosomal subunit protein mL40 (mrpl28) from Neurospora crassa (strain ATCC 24698 / 74-OR23-1A / CBS 708.71 / DSM 1257 / FGSC 987).